A 984-amino-acid polypeptide reads, in one-letter code: Zinc finger and BTB domain-containing protein 4 (984 aa).

Residues 30-131 (CDVTLIAGDT…IYSARLALPG (102 aa)) enclose the BTB domain. Lysine 40 is covalently cross-linked (Glycyl lysine isopeptide (Lys-Gly) (interchain with G-Cter in SUMO2)). Disordered regions lie at residues 71 to 104 (TGGS…PPRV), 172 to 210 (MVTS…RRPF), and 227 to 262 (THEA…ASAL). Over residues 74-88 (SAPSPATTTAASSSS) the composition is skewed to low complexity. The interaction with CBFA2T3 stretch occupies residues 165 to 324 (VPPAPSSMVT…CRYCEKVFAL (160 aa)). The segment at 210 to 232 (FPCPRCGKSFIHPKRLQTHEAQC) adopts a C2H2-type 1; atypical zinc-finger fold. Residues 242 to 255 (AGLGPGGSGPGGPA) are compositionally biased toward gly residues. C2H2-type zinc fingers lie at residues 285–307 (YVCA…SNVH), 313–335 (YPCR…EVWH), and 341–364 (YQCI…RAFH). Serine 367 bears the Phosphoserine mark. Positions 461 to 575 (GSSSSGAAGG…GSSQLQAPPP (115 aa)) are disordered. A compositionally biased stretch (gly residues) spans 467–477 (AAGGGPVGTGG). 2 stretches are compositionally biased toward low complexity: residues 478–488 (SQAASVITYTT) and 507–529 (ATPT…ATAT). A Glycyl lysine isopeptide (Lys-Gly) (interchain with G-Cter in SUMO2) cross-link involves residue lysine 548. Gly residues predominate over residues 552–565 (GVSGSGGSPTGTGR). Lysine 590 participates in a covalent cross-link: Glycyl lysine isopeptide (Lys-Gly) (interchain with G-Cter in SUMO2). Disordered stretches follow at residues 593-696 (ISET…GERR), 713-734 (RKHQ…RSST), 756-836 (QRHA…VAGG), 853-876 (GGSR…ASEG), and 947-984 (QTAP…GDVG). The segment covering 604–627 (SGEEVEESEEEEEEEEEEDQEDQE) has biased composition (acidic residues). Residues 628 to 637 (ESKAGGEDQL) show a composition bias toward basic and acidic residues. C2H2-type zinc fingers lie at residues 697 to 719 (HRCG…QEAH) and 736 to 758 (FTCP…GQRH). A phosphothreonine; by HIPK2 mark is found at threonine 766 and threonine 768. Over residues 807-819 (AAAAAAEASESAS) the composition is skewed to low complexity. Positions 948–966 (TAPPTPPTPPPPLPLPVPP) are enriched in pro residues. Threonine 955 carries the phosphothreonine; by HIPK2 modification.

Interacts with HIPK2. Interacts with CBFA2T3. Interacts with ZBTB38. Post-translationally, phosphorylated by HIPK2. This phosphorylation reduces stability and triggers ZBTB4 protein degradation in response to DNA damage.

Its subcellular location is the nucleus. The protein localises to the chromosome. Transcriptional repressor with bimodal DNA-binding specificity. Represses transcription in a methyl-CpG-dependent manner. Binds with a higher affinity to methylated CpG dinucleotides in the consensus sequence 5'-CGCG-3' but can also bind to the non-methylated consensus sequence 5'-CTGCNA-3' also known as the consensus kaiso binding site (KBS). Can also bind specifically to a single methyl-CpG pair and can bind hemimethylated DNA but with a lower affinity compared to methylated DNA. Plays a role in postnatal myogenesis, may be involved in the regulation of satellite cells self-renewal. This Rattus norvegicus (Rat) protein is Zinc finger and BTB domain-containing protein 4 (Zbtb4).